Consider the following 969-residue polypeptide: Liprin-beta-1 (969 aa).

Ser-37 carries the post-translational modification Phosphoserine. Residue Thr-39 is modified to Phosphothreonine. Ser-40 bears the Phosphoserine mark. Residues Gly-99–Asp-310 are a coiled coil. At Lys-291 the chain carries N6-acetyllysine. 3 disordered regions span residues Asp-342–Leu-361, Leu-381–Gly-407, and Gly-424–Arg-482. Positions Ser-346–Arg-358 are enriched in low complexity. 2 positions are modified to phosphoserine: Ser-403 and Ser-435. A compositionally biased stretch (low complexity) spans Ser-426–Asn-438. Residues Leu-439–Thr-452 show a composition bias toward basic and acidic residues. Lys-440 is covalently cross-linked (Glycyl lysine isopeptide (Lys-Gly) (interchain with G-Cter in SUMO2)). Ser-500 carries the phosphoserine modification. Positions Ala-518–Thr-529 are enriched in polar residues. The segment at Ala-518–Gly-593 is disordered. A Phosphoserine modification is found at Ser-538. Residues Lys-543–Arg-557 are compositionally biased toward basic residues. Residues Ser-560 and Ser-595 each carry the phosphoserine modification. 2 consecutive SAM domains span residues Trp-606 to Glu-670 and Leu-678 to Asn-741. Phosphoserine is present on residues Ser-753 and Ser-757. Residues Val-763–Ala-835 form the SAM 3 domain. Phosphoserine is present on residues Ser-957, Ser-959, and Ser-961. Thr-963 carries the post-translational modification Phosphothreonine.

Belongs to the liprin family. Liprin-beta subfamily. As to quaternary structure, forms homodimers and heterodimers. Interacts with S100A4 in a Ca(2+)-dependent mode. Part of a cortical microtubule stabilization complex (CMSC) composed of KANK1, PPFIA1, PPFIBP1, ERC1/ELKS, PHLDB2/LL5beta, CLASPs, KIF21A and possibly additional interactors; within CMSCs KANK1 and PHLDB2/LL5beta seem to be the core components for recruiting microtubule-binding proteins KIF21A and CLASPs, whereas PPFIA1, PPFIBP1 and ERC1/ELKS serve as scaffolds for protein clustering. Interacts with KANK1 (via CC1 domain, residues 244-339).

Its subcellular location is the cytoplasm. The protein localises to the cell cortex. Functionally, may regulate the disassembly of focal adhesions. Did not bind receptor-like tyrosine phosphatases type 2A. The chain is Liprin-beta-1 (Ppfibp1) from Mus musculus (Mouse).